We begin with the raw amino-acid sequence, 93 residues long: Aspartyl/glutamyl-tRNA(Asn/Gln) amidotransferase subunit C (93 aa).

It belongs to the GatC family. Heterotrimer of A, B and C subunits.

The enzyme catalyses L-glutamyl-tRNA(Gln) + L-glutamine + ATP + H2O = L-glutaminyl-tRNA(Gln) + L-glutamate + ADP + phosphate + H(+). It catalyses the reaction L-aspartyl-tRNA(Asn) + L-glutamine + ATP + H2O = L-asparaginyl-tRNA(Asn) + L-glutamate + ADP + phosphate + 2 H(+). Allows the formation of correctly charged Asn-tRNA(Asn) or Gln-tRNA(Gln) through the transamidation of misacylated Asp-tRNA(Asn) or Glu-tRNA(Gln) in organisms which lack either or both of asparaginyl-tRNA or glutaminyl-tRNA synthetases. The reaction takes place in the presence of glutamine and ATP through an activated phospho-Asp-tRNA(Asn) or phospho-Glu-tRNA(Gln). The protein is Aspartyl/glutamyl-tRNA(Asn/Gln) amidotransferase subunit C of Methanococcoides burtonii (strain DSM 6242 / NBRC 107633 / OCM 468 / ACE-M).